The following is a 308-amino-acid chain: Ribosomal RNA small subunit methyltransferase H (308 aa).

Residues 36 to 38 (GGH), Asp55, Phe86, Asp103, and Gln110 contribute to the S-adenosyl-L-methionine site.

The protein belongs to the methyltransferase superfamily. RsmH family.

The protein localises to the cytoplasm. It carries out the reaction cytidine(1402) in 16S rRNA + S-adenosyl-L-methionine = N(4)-methylcytidine(1402) in 16S rRNA + S-adenosyl-L-homocysteine + H(+). Specifically methylates the N4 position of cytidine in position 1402 (C1402) of 16S rRNA. This is Ribosomal RNA small subunit methyltransferase H from Helicobacter pylori (strain HPAG1).